We begin with the raw amino-acid sequence, 457 residues long: PDZ and LIM domain protein 7 (457 aa).

One can recognise a PDZ domain in the interval 1 to 85 (MDSFKVVLEG…RLSLGLSRAQ (85 aa)). Ser78 bears the Phosphoserine mark. Disordered regions lie at residues 81 to 132 (LSRA…LSQN) and 186 to 226 (FMKK…PWAV). The residue at position 96 (Thr96) is a Phosphothreonine. Arg103 carries the post-translational modification Asymmetric dimethylarginine. Ser111 carries the phosphoserine modification. At Ser247 the chain carries Phosphoserine. 3 consecutive LIM zinc-binding domains span residues 280-338 (PVCH…VRYA), 339-398 (PSCA…MFGT), and 399-457 (KCRG…FSHV).

In terms of assembly, binds via its LIM zinc-binding 3 domain (LIM 3) domain to endocytic codes of INSR, but not with those of IGF1R, LDLR, TFRC, or EGFR. Interacts with various PKC isoforms through the LIM zinc-binding domains. Binds to RET in a phosphorylation-independent manner via its LIM zinc-binding 2 domain (LIM 2). Probably part of a complex with SHC and the RET dimer. Interacts with TPM2, TBX4 and TBX5. Interacts (via LIM domains) with SIPA1L1. Expressed in kidney, heart, brain, lung, and skeletal muscle. Overexpression results in the synthesis of an unidentified soluble factor which acts on cells in the osteoblast lineage causing them to differentiate and secrete BMP-2.

The protein resides in the cytoplasm. Its subcellular location is the cytoskeleton. In terms of biological role, may function as a scaffold on which the coordinated assembly of proteins can occur. May play a role as an adapter that, via its PDZ domain, localizes LIM-binding proteins to actin filaments of both skeletal muscle and nonmuscle tissues. Involved in both of the two fundamental mechanisms of bone formation, direct bone formation (e.g. embryonic flat bones mandible and cranium), and endochondral bone formation (e.g. embryonic long bone development). Plays a role during fracture repair. Involved in BMP6 signaling pathway. In Rattus norvegicus (Rat), this protein is PDZ and LIM domain protein 7 (Pdlim7).